The following is a 382-amino-acid chain: Na(+)/H(+) antiporter NhaA (382 aa).

The next 11 helical transmembrane spans lie at 14–34 (AGGI…NSAM), 47–67 (FGMS…FLLI), 87–107 (IFPA…YVAF), 117–137 (GWAI…ALLG), 146–166 (VFLL…IALF), 171–191 (LSTI…MLNA), 205–225 (LILW…GVVI), 247–267 (ALHP…NAGI), 271–291 (GVSL…GLFL), 321–341 (IFAV…ISSL), and 353–373 (YARL…YSLL).

This sequence belongs to the NhaA Na(+)/H(+) (TC 2.A.33) antiporter family.

Its subcellular location is the cell inner membrane. The enzyme catalyses Na(+)(in) + 2 H(+)(out) = Na(+)(out) + 2 H(+)(in). Na(+)/H(+) antiporter that extrudes sodium in exchange for external protons. The chain is Na(+)/H(+) antiporter NhaA from Vibrio cholerae serotype O1 (strain ATCC 39541 / Classical Ogawa 395 / O395).